The sequence spans 37 residues: U10-ctenitoxin-Co1a (37 aa).

Cystine bridges form between Cys-2–Cys-17, Cys-9–Cys-22, Cys-16–Cys-33, and Cys-24–Cys-31.

In terms of tissue distribution, expressed by the venom gland.

The protein resides in the secreted. Antagonist of L-type calcium channels (Cav1/CACNA1). In Ctenus ornatus (Brazilian spider), this protein is U10-ctenitoxin-Co1a.